Here is a 343-residue protein sequence, read N- to C-terminus: Phosphoribosylformylglycinamidine cyclo-ligase (343 aa).

Belongs to the AIR synthase family.

It is found in the cytoplasm. The enzyme catalyses 2-formamido-N(1)-(5-O-phospho-beta-D-ribosyl)acetamidine + ATP = 5-amino-1-(5-phospho-beta-D-ribosyl)imidazole + ADP + phosphate + H(+). It participates in purine metabolism; IMP biosynthesis via de novo pathway; 5-amino-1-(5-phospho-D-ribosyl)imidazole from N(2)-formyl-N(1)-(5-phospho-D-ribosyl)glycinamide: step 2/2. The chain is Phosphoribosylformylglycinamidine cyclo-ligase from Thermodesulfovibrio yellowstonii (strain ATCC 51303 / DSM 11347 / YP87).